The following is a 603-amino-acid chain: Protein regulator of cytokinesis 1 (603 aa).

The tract at residues 1 to 341 is dimerization; the sequence is MRRSEVLADE…HLHDAEIVRL (341 aa). Coiled coils occupy residues 34-65, 96-136, 211-246, 272-304, and 383-463; these read EQRL…RERL, ILQL…DILC, SLEN…IREL, RNAL…LAQF, and GNLL…AEML. The interval 342-466 is spectrin-fold; it reads RNYYDVHKEL…QTEAEMLYGS (125 aa). Basic and acidic residues predominate over residues 447-459; the sequence is KQERQLKNKKQTE. The segment at 447–502 is disordered; sequence KQERQLKNKKQTEAEMLYGSTPRTPSKRPGQTPKKSGKMNTTTMSSATPNSSIRPV. Positions 467-603 are unstructured, Arg/Lys rich; sequence TPRTPSKRPG…RILNSTNIQS (137 aa). Residue Thr-470 is modified to Phosphothreonine; by CDK1. Polar residues predominate over residues 484–499; sequence KMNTTTMSSATPNSSI. Phosphoserine occurs at positions 510 and 568. The residue at position 575 (Thr-575) is a Phosphothreonine. The tract at residues 583-603 is disordered; it reads LSKASRSDATSRILNSTNIQS. Residues 589–603 are compositionally biased toward polar residues; that stretch reads SDATSRILNSTNIQS. Thr-599 bears the Phosphothreonine; by PLK1 mark.

Belongs to the MAP65/ASE1 family. In terms of assembly, homodimer. Interacts with the C-terminal Rho-GAP domain and the basic region of RACGAP1. The interaction with RACGAP1 inhibits its GAP activity towards CDC42 in vitro, which may be required for maintaining normal spindle morphology. Interacts (via N-terminus) with the C-terminus of CENPE (via C-terminus); the interaction occurs during late mitosis. Interacts (via N-terminus) with KIF4A (via C-terminus); the interaction is required for the progression of mitosis. Interacts (via N-terminus) with KIF23 (via C-terminus); the interaction occurs during late mitosis. Interacts with KIF14 and KIF20A. Interacts with PLK1. Interacts with KIF20B. Interacts with CCDC66. Phosphorylation by CDK1 in early mitosis holds PRC1 in an inactive monomeric state, during the metaphase to anaphase transition, PRC1 is dephosphorylated, promoting interaction with KIF4A, which then translocates PRC1 along mitotic spindles to the plus ends of antiparallel interdigitating microtubules. Dephosphorylation also promotes MT-bundling activity by allowing dimerization. Phosphorylation by CDK1 prevents PLK1-binding: upon degradation of CDK1 at anaphase and dephosphorylation, it is then phosphorylated by PLK1, leading to cytokinesis.

It is found in the nucleus. Its subcellular location is the cytoplasm. The protein resides in the cytoskeleton. It localises to the spindle pole. The protein localises to the midbody. Functionally, key regulator of cytokinesis that cross-links antiparrallel microtubules at an average distance of 35 nM. Essential for controlling the spatiotemporal formation of the midzone and successful cytokinesis. Required for KIF14 localization to the central spindle and midbody. Required to recruit PLK1 to the spindle. Stimulates PLK1 phosphorylation of RACGAP1 to allow recruitment of ECT2 to the central spindle. Acts as an oncogene for promoting bladder cancer cells proliferation, apoptosis inhibition and carcinogenic progression. The sequence is that of Protein regulator of cytokinesis 1 from Mus musculus (Mouse).